Consider the following 248-residue polypeptide: tRNA pseudouridine synthase A (248 aa).

The Nucleophile role is filled by aspartate 53. Tyrosine 111 serves as a coordination point for substrate.

The protein belongs to the tRNA pseudouridine synthase TruA family. Homodimer.

It catalyses the reaction uridine(38/39/40) in tRNA = pseudouridine(38/39/40) in tRNA. Functionally, formation of pseudouridine at positions 38, 39 and 40 in the anticodon stem and loop of transfer RNAs. The sequence is that of tRNA pseudouridine synthase A from Streptococcus thermophilus (strain CNRZ 1066).